Consider the following 163-residue polypeptide: Allophycocyanin alpha-B chain (163 aa).

An N4-methylasparagine modification is found at Asn71. Cys81 is a (2R,3E)-phycocyanobilin binding site.

This sequence belongs to the phycobiliprotein family. Post-translationally, contains one covalently linked bilin chromophore.

It is found in the plastid. The protein localises to the chloroplast thylakoid membrane. In terms of biological role, allophycocyanin is a photosynthetic bile pigment-protein complex with maximum absorption at approximately 650 nanometers. This is Allophycocyanin alpha-B chain (apcD) from Cyanidium caldarium (Red alga).